Here is a 217-residue protein sequence, read N- to C-terminus: Gas vesicle protein F2 (217 aa).

The protein belongs to the gas vesicle GvpF/GvpL family. As to quaternary structure, binds GvpA.

It localises to the gas vesicle. Its subcellular location is the cytoplasm. Its function is as follows. A minor component of the gas vesicle, may be involved in preventing GvpA aggregation during gas vesicle nucleation. Gas vesicles are hollow, gas filled proteinaceous nanostructures found in several microbial planktonic microorganisms. They allow positioning of halobacteria at the optimal depth for growth in the poorly aerated, shallow brine pools of their habitat. In terms of biological role, expression of 2 c-vac DNA fragments containing 2 divergently transcribed regions (gvpE-gvpF-gvpG-gvpH-gvpI-gvpJ-gvpK-gvpL-gvpM and gvpA-gvpC-gvpN-gvpO) allows H.volcanii to produce gas vesicles. Note that gvpD is not necessary for gas vesicle formation. The chain is Gas vesicle protein F2 from Halobacterium salinarum (strain ATCC 700922 / JCM 11081 / NRC-1) (Halobacterium halobium).